The sequence spans 149 residues: Transcriptional repressor NrdR (149 aa).

Residues 3 to 34 (CPFCSIQETKVIDSRLVADGHQVRRRRECTMC) fold into a zinc finger. In terms of domain architecture, ATP-cone spans 49–139 (PRVVKRDGSR…VYRSFEDIRE (91 aa)).

The protein belongs to the NrdR family. Zn(2+) is required as a cofactor.

Negatively regulates transcription of bacterial ribonucleotide reductase nrd genes and operons by binding to NrdR-boxes. In Pseudoalteromonas atlantica (strain T6c / ATCC BAA-1087), this protein is Transcriptional repressor NrdR.